The chain runs to 87 residues: Apolipoprotein C-I (87 aa).

The first 26 residues, 1 to 26 (MRLILSLPVLAVVLAMVLEGPAPAQA), serve as a signal peptide directing secretion.

This sequence belongs to the apolipoprotein C1 family.

It is found in the secreted. Functionally, inhibitor of lipoprotein binding to the low density lipoprotein (LDL) receptor, LDL receptor-related protein, and very low density lipoprotein (VLDL) receptor. Associates with high density lipoproteins (HDL) and the triacylglycerol-rich lipoproteins in the plasma and makes up about 10% of the protein of the VLDL and 2% of that of HDL. Appears to interfere directly with fatty acid uptake and is also the major plasma inhibitor of cholesteryl ester transfer protein (CETP). Binds free fatty acids and reduces their intracellular esterification. Modulates the interaction of APOE with beta-migrating VLDL and inhibits binding of beta-VLDL to the LDL receptor-related protein. The polypeptide is Apolipoprotein C-I (APOC1) (Pteropus vampyrus (Large flying fox)).